Consider the following 154-residue polypeptide: Myoglobin (154 aa).

A Globin domain is found at G2–K148. Position 4 is a phosphoserine (S4). H65 is a binding site for nitrite. H65 contributes to the O2 binding site. T68 carries the post-translational modification Phosphothreonine. H94 contacts heme b.

This sequence belongs to the globin family. As to quaternary structure, monomeric.

Its subcellular location is the cytoplasm. The protein localises to the sarcoplasm. The catalysed reaction is Fe(III)-heme b-[protein] + nitric oxide + H2O = Fe(II)-heme b-[protein] + nitrite + 2 H(+). It catalyses the reaction H2O2 + AH2 = A + 2 H2O. Functionally, monomeric heme protein which primary function is to store oxygen and facilitate its diffusion within muscle tissues. Reversibly binds oxygen through a pentacoordinated heme iron and enables its timely and efficient release as needed during periods of heightened demand. Depending on the oxidative conditions of tissues and cells, and in addition to its ability to bind oxygen, it also has a nitrite reductase activity whereby it regulates the production of bioactive nitric oxide. Under stress conditions, like hypoxia and anoxia, it also protects cells against reactive oxygen species thanks to its pseudoperoxidase activity. This chain is Myoglobin (MB), found in Ochotona curzoniae (Black-lipped pika).